Here is a 237-residue protein sequence, read N- to C-terminus: Ribonuclease PH (237 aa).

Residues arginine 86 and 124 to 126 each bind phosphate; that span reads GTR.

This sequence belongs to the RNase PH family. Homohexameric ring arranged as a trimer of dimers.

The enzyme catalyses tRNA(n+1) + phosphate = tRNA(n) + a ribonucleoside 5'-diphosphate. Phosphorolytic 3'-5' exoribonuclease that plays an important role in tRNA 3'-end maturation. Removes nucleotide residues following the 3'-CCA terminus of tRNAs; can also add nucleotides to the ends of RNA molecules by using nucleoside diphosphates as substrates, but this may not be physiologically important. Probably plays a role in initiation of 16S rRNA degradation (leading to ribosome degradation) during starvation. This chain is Ribonuclease PH, found in Roseobacter denitrificans (strain ATCC 33942 / OCh 114) (Erythrobacter sp. (strain OCh 114)).